Reading from the N-terminus, the 323-residue chain is Methenyltetrahydromethanopterin cyclohydrolase (323 aa).

Belongs to the MCH family.

It localises to the cytoplasm. The enzyme catalyses 5,10-methenyl-5,6,7,8-tetrahydromethanopterin + H2O = N(5)-formyl-5,6,7,8-tetrahydromethanopterin + H(+). Its pathway is one-carbon metabolism; methanogenesis from CO(2); 5,10-methenyl-5,6,7,8-tetrahydromethanopterin from CO(2): step 3/3. Catalyzes the reversible interconversion of 5-formyl-H(4)MPT to methenyl-H(4)MPT(+). In Methanococcus maripaludis (strain C5 / ATCC BAA-1333), this protein is Methenyltetrahydromethanopterin cyclohydrolase.